The chain runs to 387 residues: Succinate--CoA ligase [ADP-forming] subunit beta (387 aa).

ATP contacts are provided by residues Lys46, 53-55 (GRG), Glu99, Ala102, and Glu107. Mg(2+) is bound by residues Asn199 and Asp213. Substrate-binding positions include Asn264 and 321–323 (GIV).

Belongs to the succinate/malate CoA ligase beta subunit family. As to quaternary structure, heterotetramer of two alpha and two beta subunits. The cofactor is Mg(2+).

It carries out the reaction succinate + ATP + CoA = succinyl-CoA + ADP + phosphate. The enzyme catalyses GTP + succinate + CoA = succinyl-CoA + GDP + phosphate. It functions in the pathway carbohydrate metabolism; tricarboxylic acid cycle; succinate from succinyl-CoA (ligase route): step 1/1. Its function is as follows. Succinyl-CoA synthetase functions in the citric acid cycle (TCA), coupling the hydrolysis of succinyl-CoA to the synthesis of either ATP or GTP and thus represents the only step of substrate-level phosphorylation in the TCA. The beta subunit provides nucleotide specificity of the enzyme and binds the substrate succinate, while the binding sites for coenzyme A and phosphate are found in the alpha subunit. This chain is Succinate--CoA ligase [ADP-forming] subunit beta, found in Campylobacter jejuni (strain RM1221).